Consider the following 881-residue polypeptide: Alanine--tRNA ligase (881 aa).

Positions 568, 572, 670, and 674 each coordinate Zn(2+).

The protein belongs to the class-II aminoacyl-tRNA synthetase family. The cofactor is Zn(2+).

Its subcellular location is the cytoplasm. It catalyses the reaction tRNA(Ala) + L-alanine + ATP = L-alanyl-tRNA(Ala) + AMP + diphosphate. Functionally, catalyzes the attachment of alanine to tRNA(Ala) in a two-step reaction: alanine is first activated by ATP to form Ala-AMP and then transferred to the acceptor end of tRNA(Ala). Also edits incorrectly charged Ser-tRNA(Ala) and Gly-tRNA(Ala) via its editing domain. This is Alanine--tRNA ligase from Clostridium acetobutylicum (strain ATCC 824 / DSM 792 / JCM 1419 / IAM 19013 / LMG 5710 / NBRC 13948 / NRRL B-527 / VKM B-1787 / 2291 / W).